Reading from the N-terminus, the 743-residue chain is Ectonucleotide pyrophosphatase/phosphodiesterase C27A7.3 (743 aa).

Topologically, residues 1 to 23 (MSNRVVDVNSKKTGTSWKKKLMK) are cytoplasmic. Residues 24-44 (IVIWSLAMLSFIAGLVLLGLV) form a helical; Signal-anchor for type II membrane protein membrane-spanning segment. The Lumenal portion of the chain corresponds to 45–743 (AAATISGSKN…LRRNITTSLW (699 aa)). Zn(2+)-binding residues include aspartate 87 and threonine 123. Threonine 123 acts as the Nucleophile in catalysis. The N-linked (GlcNAc...) asparagine glycan is linked to asparagine 195. Zn(2+) contacts are provided by aspartate 243, histidine 247, aspartate 286, and histidine 287. Residues asparagine 293 and asparagine 320 are each glycosylated (N-linked (GlcNAc...) asparagine). Histidine 383 is a binding site for Zn(2+). N-linked (GlcNAc...) asparagine glycosylation is found at asparagine 406, asparagine 434, and asparagine 536. Ca(2+)-binding residues include aspartate 635, asparagine 637, aspartate 639, isoleucine 641, and aspartate 643. A glycan (N-linked (GlcNAc...) asparagine) is linked at asparagine 737.

Belongs to the nucleotide pyrophosphatase/phosphodiesterase family. The cofactor is Zn(2+). Requires Ca(2+) as cofactor.

It is found in the membrane. In terms of biological role, probable phosphodiesterase. In Caenorhabditis elegans, this protein is Ectonucleotide pyrophosphatase/phosphodiesterase C27A7.3.